Consider the following 385-residue polypeptide: MNKVNKINAYTCSSFQLHTIMKISFYVVERGFELAAFFTRRTIWIIISILLFLVAAYFILPVSLPLVAALLTALILTPAVNALQRKTKIKRNVAVMLVFTVFVVFIGLSGYYIATKAITQGTQIVENSPQYISDINRAWLNFQRNLEEKYENLPPELVQEINITVTNTLSDLRSNISDRNLIQDITSLISSIPGYLVTFLVYLIALFLFMLELPRLREKLYSYLSERTKEKVNFMTSRLSYVIWGFFKAQFLVSIIIFIVTLIGLLFIAPEVALLMAFIIWLIDFVPIIGSIVILAPWAIFQLIVGDVSTGSKLLILAAVLLIIRRTVEPKVMGKHIGLSPLATLIAMYLGLMLFGVIGFIIGPLLVIAFTSAKEAGIIKLNFKL.

8 consecutive transmembrane segments (helical) span residues 42–62 (TIWI…ILPV), 63–83 (SLPL…VNAL), 93–113 (VAVM…GYYI), 191–211 (SIPG…LFML), 255–275 (IIIF…VALL), 276–296 (MAFI…VILA), 304–324 (IVGD…LLII), and 350–370 (LGLM…VIAF).

The protein belongs to the autoinducer-2 exporter (AI-2E) (TC 2.A.86) family.

It localises to the cell membrane. The sequence is that of Putative transport protein BpOF4_00890 from Alkalihalophilus pseudofirmus (strain ATCC BAA-2126 / JCM 17055 / OF4) (Bacillus pseudofirmus).